The following is a 79-amino-acid chain: Small ribosomal subunit protein bS18 (79 aa).

This sequence belongs to the bacterial ribosomal protein bS18 family. Part of the 30S ribosomal subunit. Forms a tight heterodimer with protein bS6.

Its function is as follows. Binds as a heterodimer with protein bS6 to the central domain of the 16S rRNA, where it helps stabilize the platform of the 30S subunit. The protein is Small ribosomal subunit protein bS18 of Nitrobacter winogradskyi (strain ATCC 25391 / DSM 10237 / CIP 104748 / NCIMB 11846 / Nb-255).